The following is a 237-amino-acid chain: Leucyl/phenylalanyl-tRNA--protein transferase (237 aa).

Belongs to the L/F-transferase family.

Its subcellular location is the cytoplasm. The catalysed reaction is N-terminal L-lysyl-[protein] + L-leucyl-tRNA(Leu) = N-terminal L-leucyl-L-lysyl-[protein] + tRNA(Leu) + H(+). It carries out the reaction N-terminal L-arginyl-[protein] + L-leucyl-tRNA(Leu) = N-terminal L-leucyl-L-arginyl-[protein] + tRNA(Leu) + H(+). The enzyme catalyses L-phenylalanyl-tRNA(Phe) + an N-terminal L-alpha-aminoacyl-[protein] = an N-terminal L-phenylalanyl-L-alpha-aminoacyl-[protein] + tRNA(Phe). In terms of biological role, functions in the N-end rule pathway of protein degradation where it conjugates Leu, Phe and, less efficiently, Met from aminoacyl-tRNAs to the N-termini of proteins containing an N-terminal arginine or lysine. This Photobacterium profundum (strain SS9) protein is Leucyl/phenylalanyl-tRNA--protein transferase.